We begin with the raw amino-acid sequence, 211 residues long: MRVRNRKGATELLEANPQYVVLNPLEAKAKWRDLFGNDNPIHVEVGSGKGAFVSGMAKQNPDINYIGIDIQKSVLSYALDKVLEAGVSNIKLLWVDGSDLTDYFEDGEIDRLYLNFSDPWPKKRHEKRRLTYKTFLDTFKRILPENGEIHFKTDNRGLFEYSLVSFSQYGMKLNGVWLDLHASDFEGNVMTEYEQKFSNKGQVIYRVEAEF.

Residues Glu44, Asp69, Asp96, and Asp118 each coordinate S-adenosyl-L-methionine. Asp118 is a catalytic residue. Lys122 is a substrate binding site. The interaction with RNA stretch occupies residues 124-129; sequence RHEKRR. Substrate contacts are provided by residues Asp154 and 191-194; that span reads TEYE.

Belongs to the class I-like SAM-binding methyltransferase superfamily. TrmB family.

The enzyme catalyses guanosine(46) in tRNA + S-adenosyl-L-methionine = N(7)-methylguanosine(46) in tRNA + S-adenosyl-L-homocysteine. Its pathway is tRNA modification; N(7)-methylguanine-tRNA biosynthesis. Its function is as follows. Catalyzes the formation of N(7)-methylguanine at position 46 (m7G46) in tRNA. The polypeptide is tRNA (guanine-N(7)-)-methyltransferase (Streptococcus pneumoniae (strain Taiwan19F-14)).